An 87-amino-acid chain; its full sequence is uncharacterized protein (87 aa).

It belongs to the SF3B5 family.

This is an uncharacterized protein from Arabidopsis thaliana (Mouse-ear cress).